We begin with the raw amino-acid sequence, 264 residues long: S-adenosylmethionine decarboxylase proenzyme (264 aa).

Ser112 serves as the catalytic Schiff-base intermediate with substrate; via pyruvic acid. Ser112 is subject to Pyruvic acid (Ser); by autocatalysis. The Proton acceptor; for processing activity role is filled by His117. Cys140 acts as the Proton donor; for catalytic activity in catalysis.

This sequence belongs to the prokaryotic AdoMetDC family. Type 2 subfamily. Heterooctamer of four alpha and four beta chains arranged as a tetramer of alpha/beta heterodimers. The cofactor is pyruvate. Is synthesized initially as an inactive proenzyme. Formation of the active enzyme involves a self-maturation process in which the active site pyruvoyl group is generated from an internal serine residue via an autocatalytic post-translational modification. Two non-identical subunits are generated from the proenzyme in this reaction, and the pyruvate is formed at the N-terminus of the alpha chain, which is derived from the carboxyl end of the proenzyme. The post-translation cleavage follows an unusual pathway, termed non-hydrolytic serinolysis, in which the side chain hydroxyl group of the serine supplies its oxygen atom to form the C-terminus of the beta chain, while the remainder of the serine residue undergoes an oxidative deamination to produce ammonia and the pyruvoyl group blocking the N-terminus of the alpha chain.

It catalyses the reaction S-adenosyl-L-methionine + H(+) = S-adenosyl 3-(methylsulfanyl)propylamine + CO2. Its pathway is amine and polyamine biosynthesis; S-adenosylmethioninamine biosynthesis; S-adenosylmethioninamine from S-adenosyl-L-methionine: step 1/1. Its function is as follows. Catalyzes the decarboxylation of S-adenosylmethionine to S-adenosylmethioninamine (dcAdoMet), the propylamine donor required for the synthesis of the polyamines spermine and spermidine from the diamine putrescine. This Escherichia coli O127:H6 (strain E2348/69 / EPEC) protein is S-adenosylmethionine decarboxylase proenzyme.